The chain runs to 212 residues: Proteasome subunit beta 2 (212 aa).

A propeptide spans 1-13 (MSVDEKVARALKG) (removed in mature form; by autocatalysis). T14 (nucleophile) is an active-site residue.

The protein belongs to the peptidase T1B family. In terms of assembly, the 20S proteasome core is composed of 14 alpha and 14 beta subunits that assemble into four stacked heptameric rings, resulting in a barrel-shaped structure. The two inner rings, each composed of seven catalytic beta subunits, are sandwiched by two outer rings, each composed of seven alpha subunits. The catalytic chamber with the active sites is on the inside of the barrel. Has a gated structure, the ends of the cylinder being occluded by the N-termini of the alpha-subunits. Is capped at one or both ends by the proteasome regulatory ATPase, PAN.

It localises to the cytoplasm. It catalyses the reaction Cleavage of peptide bonds with very broad specificity.. The formation of the proteasomal ATPase PAN-20S proteasome complex, via the docking of the C-termini of PAN into the intersubunit pockets in the alpha-rings, triggers opening of the gate for substrate entry. Interconversion between the open-gate and close-gate conformations leads to a dynamic regulation of the 20S proteasome proteolysis activity. Functionally, component of the proteasome core, a large protease complex with broad specificity involved in protein degradation. This is Proteasome subunit beta 2 from Ignicoccus hospitalis (strain KIN4/I / DSM 18386 / JCM 14125).